The sequence spans 218 residues: MSFLDSYRKKTQMPSTDEALPGRAQPIPTSTTHFVNGRPLKGPWPEGYKQVLFGMGCFWGAERLFWQVPGVYVTAVGYAGGVTPNPTYEETCTGLTGHAEVVLVVYDPKVVSLDELLTLFWEEHDPTQGMRQGNDIGTTYRSVIYTFDKTDRDVAEKSREAYSQALAGRGLGPITTEIEDAPELYYAEDYHQQYLAKNPNGYCGLRGTGVSCPIPLAQ.

The tract at residues 1-28 (MSFLDSYRKKTQMPSTDEALPGRAQPIP) is disordered. The active site involves C57.

This sequence belongs to the MsrA Met sulfoxide reductase family.

It catalyses the reaction L-methionyl-[protein] + [thioredoxin]-disulfide + H2O = L-methionyl-(S)-S-oxide-[protein] + [thioredoxin]-dithiol. It carries out the reaction [thioredoxin]-disulfide + L-methionine + H2O = L-methionine (S)-S-oxide + [thioredoxin]-dithiol. Has an important function as a repair enzyme for proteins that have been inactivated by oxidation. Catalyzes the reversible oxidation-reduction of methionine sulfoxide in proteins to methionine. The protein is Peptide methionine sulfoxide reductase MsrA of Brucella anthropi (strain ATCC 49188 / DSM 6882 / CCUG 24695 / JCM 21032 / LMG 3331 / NBRC 15819 / NCTC 12168 / Alc 37) (Ochrobactrum anthropi).